The sequence spans 152 residues: Protein eva-1 homolog A (152 aa).

The interval 1–60 (MRLPLSHSPEHVEMALLSNILAAYSFVSENPERAALYFVSGVCIGLVLTLAALVIRISCH) is necessary for the localization and biological activity. The helical transmembrane segment at 35–55 (ALYFVSGVCIGLVLTLAALVI) threads the bilayer. The segment at 70 to 97 (KFLQDRESSSDSSDSEDGSEDTVSDLSV) is disordered. Residues 82–92 (SDSEDGSEDTV) are compositionally biased toward acidic residues. Position 106 is a phosphothreonine (threonine 106). The residue at position 114 (serine 114) is a Phosphoserine; by FAM20C.

Belongs to the EVA1 family. In terms of tissue distribution, expressed in lung, kidney, liver, pancreas, placenta, but not in heart and skeletal muscle.

Its subcellular location is the endoplasmic reticulum membrane. The protein localises to the lysosome membrane. Acts as a regulator of programmed cell death, mediating both autophagy and apoptosis. This chain is Protein eva-1 homolog A (EVA1A), found in Homo sapiens (Human).